A 222-amino-acid chain; its full sequence is Probable fimbrial chaperone EcpB (222 aa).

The first 20 residues, 1–20 (MKKHLLPLALLFSGISPAQA), serve as a signal peptide directing secretion.

The protein belongs to the EcpB/EcpE family.

Functionally, part of the ecpRABCDE operon, which encodes the E.coli common pilus (ECP). ECP is found in both commensal and pathogenic strains and plays a dual role in early-stage biofilm development and host cell recognition. The chain is Probable fimbrial chaperone EcpB (ecpB) from Escherichia coli (strain K12).